The chain runs to 457 residues: UDP-N-acetylmuramoylalanine--D-glutamate ligase (457 aa).

Residue 116–122 (GTNGKTT) participates in ATP binding.

Belongs to the MurCDEF family.

The protein localises to the cytoplasm. The catalysed reaction is UDP-N-acetyl-alpha-D-muramoyl-L-alanine + D-glutamate + ATP = UDP-N-acetyl-alpha-D-muramoyl-L-alanyl-D-glutamate + ADP + phosphate + H(+). Its pathway is cell wall biogenesis; peptidoglycan biosynthesis. Its function is as follows. Cell wall formation. Catalyzes the addition of glutamate to the nucleotide precursor UDP-N-acetylmuramoyl-L-alanine (UMA). The chain is UDP-N-acetylmuramoylalanine--D-glutamate ligase from Caldicellulosiruptor bescii (strain ATCC BAA-1888 / DSM 6725 / KCTC 15123 / Z-1320) (Anaerocellum thermophilum).